Here is a 550-residue protein sequence, read N- to C-terminus: Chaperonin GroEL (550 aa).

ATP contacts are provided by residues 30-33, Lys-51, 87-91, Gly-415, and Asp-496; these read TLGP and DGTTT. Residues 528 to 550 are disordered; sequence EGGDMPAMPPGGMGGMGGMGGMM. Gly residues predominate over residues 538–550; it reads GGMGGMGGMGGMM.

It belongs to the chaperonin (HSP60) family. Forms a cylinder of 14 subunits composed of two heptameric rings stacked back-to-back. Interacts with the co-chaperonin GroES.

The protein localises to the cytoplasm. It carries out the reaction ATP + H2O + a folded polypeptide = ADP + phosphate + an unfolded polypeptide.. In terms of biological role, together with its co-chaperonin GroES, plays an essential role in assisting protein folding. The GroEL-GroES system forms a nano-cage that allows encapsulation of the non-native substrate proteins and provides a physical environment optimized to promote and accelerate protein folding. In Chlorobium phaeobacteroides (strain BS1), this protein is Chaperonin GroEL.